The sequence spans 720 residues: Cyclopenase penL (720 aa).

Histidine 137, histidine 141, and histidine 313 together coordinate Cu cation.

It belongs to the tyrosinase family. Cu(2+) serves as cofactor.

It catalyses the reaction (-)-cyclopenine = viridicatin + methyl isocyanate + H(+). It carries out the reaction (-)-4'-methoxycyclopenine = 4'-methoxyviridicatin + methyl isocyanate + H(+). Its pathway is secondary metabolite biosynthesis. It participates in alkaloid biosynthesis. It functions in the pathway mycotoxin biosynthesis. Its function is as follows. Cyclopenase; part of the gene cluster that mediates the biosynthesis of penigequinolones, potent insecticidal alkaloids that contain a highly modified 10-carbon prenyl group. The first stage is catalyzed by the nonribosomal peptide synthetase penN that condenses anthranilic acid and O-methyl-L-tyrosine to produce 4'-methoxycyclopeptin. 4'-methoxycyclopeptin is then converted to 4'-methoxydehydrocyclopeptin by the ketoglutarate-dependent dioxygenase penM through dehydrogenation to form a double bond between C-alpha and C-beta of the O-methyltyrosine side chain. PenM also converts its first product methoxydehydrocyclopeptin to 4'-methoxycyclopenin. The following conversion of 4'methoxycyclopenin into 4'-methoxyviridicatin is catalyzed by the cyclopenase penL. 4'-methoxyviridicatin is the precursor of quinolone natural products, and is further converted to quinolinone B. The prenyltransferase penI then catalyzes the canonical Friedel-Crafts alkylation of quinolinone B with dimethylallyl cation to yield dimethylallyl quinolone, which is subjected to FAD-dependent dehydrogenation by the FAD-linked oxidoreductase penH to yield conjugated aryl diene. The delta(3') double bond then serves as the site of the second alkylation with DMAPP catalyzed by the prenyltransferase penG to yield a carbenium ion intermediate, which can be attacked by H(2)O to yield a styrenyl quinolone containing a C3'-hydroxyprenyl chain, or undergo cyclization to yield yaequinolones J1 and J2. The conversion of the styrenyl quinolone into the tetrahydrofuran-containing yaequinolone C is performed by the FAD-dependent monooxygenase penE and involves epoxidation of the terminal C7'-C8' olefin, followed by epoxide ring opening initiated by the C3' hydroxyl group. The predicted cysteine hydrolase penJ acts as an epoxide hydrolase that enhances the rate of the 5-exo-tet cyclization step, increasing the yield of yaequinolone C. PenF catalyzes the cationic rearrangement of the epoxide formed by penE (before ring opening to produce yaequinolone C) into yaequinolone D. Finally, the short-chain dehydrogenase/reductase (SDR)-like reductase penD, catalyzes both the dehydration of yaequinolone D and the reduction of the resulting oxonium to yield penigequinolone. This chain is Cyclopenase penL, found in Penicillium thymicola.